A 358-amino-acid chain; its full sequence is MHTILINKLMSLKQRFYKLEKSLNNFNTINNKEFYSLSKEHTYLHEIIKYFEEWLNIQKNIVHTKDMLSDIDMHDIVQDELKILNTSKHNLENKIKILLFSDPQDQYNCFIELRAGTGGKEAAIFAGELFRMYSRYIEMQRWNMEIIHATYGECGGYKEIIIKVPVHGSYGQLKFESGGHRVQRIPNTESQGRIHTSTCTIAVIPNIPNAILPEINSNDLRIDTFRSSGAGGQHVNTTDSAIRITHIPSGLSVECQDERSQHKNKSKALSVLKSRLYAINIKQKQQEESNVRRNLIGTGDRSDRIRTYNFQQGRVTDHRIAFTSYKLHDIMNGKLDILIQPIMCKHQATLLDQLTREK.

Position 233 is an N5-methylglutamine (Q233).

This sequence belongs to the prokaryotic/mitochondrial release factor family. Post-translationally, methylated by PrmC. Methylation increases the termination efficiency of RF1.

Its subcellular location is the cytoplasm. In terms of biological role, peptide chain release factor 1 directs the termination of translation in response to the peptide chain termination codons UAG and UAA. This Blochmanniella floridana protein is Peptide chain release factor 1.